Consider the following 439-residue polypeptide: Na(+)/H(+) antiporter NhaA 1 (439 aa).

The next 11 membrane-spanning stretches (helical) occupy residues 14-34 (ITGG…ANLA), 60-80 (ISLH…FIGL), 98-118 (ALPL…YYFF), 127-147 (GWGI…AMVG), 156-176 (IFLS…IAIF), 179-199 (EQIF…LAVA), 213-233 (IGLI…TIAG), 303-323 (HPIS…GVIV), 335-355 (IVLG…FLFA), 375-395 (IIGT…ISDL), and 408-428 (VAVL…LISA).

It belongs to the NhaA Na(+)/H(+) (TC 2.A.33) antiporter family.

It localises to the cell inner membrane. The catalysed reaction is Na(+)(in) + 2 H(+)(out) = Na(+)(out) + 2 H(+)(in). In terms of biological role, na(+)/H(+) antiporter that extrudes sodium in exchange for external protons. The polypeptide is Na(+)/H(+) antiporter NhaA 1 (Psychromonas ingrahamii (strain DSM 17664 / CCUG 51855 / 37)).